The primary structure comprises 172 residues: Large ribosomal subunit protein uL10 (172 aa).

It belongs to the universal ribosomal protein uL10 family. Part of the ribosomal stalk of the 50S ribosomal subunit. The N-terminus interacts with L11 and the large rRNA to form the base of the stalk. The C-terminus forms an elongated spine to which L12 dimers bind in a sequential fashion forming a multimeric L10(L12)X complex.

In terms of biological role, forms part of the ribosomal stalk, playing a central role in the interaction of the ribosome with GTP-bound translation factors. This chain is Large ribosomal subunit protein uL10, found in Methylorubrum extorquens (strain CM4 / NCIMB 13688) (Methylobacterium extorquens).